The primary structure comprises 101 residues: Movement protein (101 aa).

Residues 1 to 22 (MDPQNSFLLQPRVPTAAPTSGG) are disordered. The helical transmembrane segment at 30–50 (EVAILSFVGLICFYLLYLWVL) threads the bilayer. The segment at 79–101 (NPIPNTQAPPSQGNPGPFVPGTG) is disordered. Residues 80–92 (PIPNTQAPPSQGN) are compositionally biased toward polar residues.

This sequence belongs to the mastrevirus movement protein family. Interacts with the capsid protein (CP). Part of a MP-CP-viral DNA complex.

It is found in the host membrane. In terms of biological role, involved in the viral transport within, and between cells. The chain is Movement protein from Avena sativa (Oat).